The following is a 389-amino-acid chain: Chitinase-3-like protein 1 (389 aa).

An N-terminal signal peptide occupies residues 1-29; sequence MHTSTEARMGMRAALTGFAVLMLLQSCSA. Positions 30–389 constitute a GH18 domain; the sequence is YKLVCYFTSW…LTNAIKDALA (360 aa). Cys-34 and Cys-59 are oxidised to a cystine. An N-linked (GlcNAc...) asparagine glycan is attached at Asn-68. Chitin is bound by residues 79–80, 106–109, Tyr-150, and 213–216; these read EW, GGWK, and MTYD. Cys-309 and Cys-372 are joined by a disulfide. The interval 333-347 is important for AKT1 activation and IL8 production; sequence QWVGYEDKESVKNKV. Trp-361 is a binding site for chitin.

The protein belongs to the glycosyl hydrolase 18 family. In terms of assembly, monomer. Detected in lung in pulmonary macrophages and alveolar type 2 cells and in bronchoalveolar lavage (BAL) fluids. Expressed in mammary tumor cells (at protein level). Expressed in lung. Not detected in non-inflammatory colon.

The protein resides in the secreted. Its subcellular location is the extracellular space. It localises to the cytoplasm. The protein localises to the endoplasmic reticulum. Carbohydrate-binding lectin with a preference for chitin. Has no chitinase activity. May play a role in tissue remodeling and in the capacity of cells to respond to and cope with changes in their environment. Plays a role in T-helper cell type 2 (Th2) inflammatory response and IL-13-induced inflammation, regulating allergen sensitization, inflammatory cell apoptosis, dendritic cell accumulation and M2 macrophage differentiation. Facilitates invasion of pathogenic enteric bacteria into colonic mucosa and lymphoid organs. Mediates activation of AKT1 signaling pathway and subsequent IL8 production in colonic epithelial cells. Regulates antibacterial responses in lung by contributing to macrophage bacterial killing, controlling bacterial dissemination and augmenting host tolerance. Also regulates hyperoxia-induced injury, inflammation and epithelial apoptosis in lung. In Mus musculus (Mouse), this protein is Chitinase-3-like protein 1 (Chi3l1).